Here is a 278-residue protein sequence, read N- to C-terminus: Large ribosomal subunit protein uL2 (278 aa).

The disordered stretch occupies residues 226-278; that stretch reads MNPIDHPHGGGEGKTAAGRHPVSPWGTPSKGSRTRKNKRTSNMIVRSRYSKKG.

It belongs to the universal ribosomal protein uL2 family. In terms of assembly, part of the 50S ribosomal subunit. Forms a bridge to the 30S subunit in the 70S ribosome.

Functionally, one of the primary rRNA binding proteins. Required for association of the 30S and 50S subunits to form the 70S ribosome, for tRNA binding and peptide bond formation. It has been suggested to have peptidyltransferase activity; this is somewhat controversial. Makes several contacts with the 16S rRNA in the 70S ribosome. The chain is Large ribosomal subunit protein uL2 from Nitrosomonas europaea (strain ATCC 19718 / CIP 103999 / KCTC 2705 / NBRC 14298).